Consider the following 229-residue polypeptide: ATP synthase subunit a (229 aa).

Helical transmembrane passes span 25-45, 86-106, 111-131, 142-162, 181-201, and 202-222; these read ADAI…SLIA, IATL…PGFF, NLNT…IVGI, FMGP…IGHL, LVLM…MMLM, and GVLV…IYIQ.

It belongs to the ATPase A chain family. In terms of assembly, F-type ATPases have 2 components, CF(1) - the catalytic core - and CF(0) - the membrane proton channel. CF(1) has five subunits: alpha(3), beta(3), gamma(1), delta(1), epsilon(1). CF(0) has three main subunits: a(1), b(2) and c(9-12). The alpha and beta chains form an alternating ring which encloses part of the gamma chain. CF(1) is attached to CF(0) by a central stalk formed by the gamma and epsilon chains, while a peripheral stalk is formed by the delta and b chains.

It localises to the cell inner membrane. Its function is as follows. Key component of the proton channel; it plays a direct role in the translocation of protons across the membrane. In Geobacter sulfurreducens (strain ATCC 51573 / DSM 12127 / PCA), this protein is ATP synthase subunit a.